A 910-amino-acid chain; its full sequence is Eukaryotic translation initiation factor 3 subunit C (910 aa).

Positions 1-21 are disordered; that stretch reads MSRFFANGSDSESESSEDEIQ. Positions 11 to 20 are enriched in acidic residues; it reads SESESSEDEI. Residues Ser-34, Ser-165, Ser-176, and Ser-185 each carry the phosphoserine modification. The tract at residues 157–281 is disordered; that stretch reads FREAPDQESE…KRAEDDEDGE (125 aa). The segment covering 162 to 186 has biased composition (acidic residues); that stretch reads DQESEAEDEVVAQESDGGDAGDDSD. Residues 193–207 show a composition bias toward low complexity; it reads EAAPKAVKSAPAKAA. A compositionally biased stretch (acidic residues) spans 209–235; sequence ADDDDSDDSIDWDSDSESETESSDDEN. The segment covering 240-268 has biased composition (basic and acidic residues); sequence MRERFLKRTTEKEEKDDDKRKDKRKEQKV. A PCI domain is found at 639 to 815; sequence FHMHINLELL…ETVVMHRSEP (177 aa). Residues 847–910 form a disordered region; that stretch reads FFQRGNMGNR…QQQVQTIDEE (64 aa). The segment covering 862 to 874 has biased composition (low complexity); the sequence is NRNQNNQGGNWLG. Residues 882–891 are compositionally biased toward basic residues; it reads RNRNQRGHHK. Positions 895-910 are enriched in low complexity; it reads DRQQQQQQQVQTIDEE.

This sequence belongs to the eIF-3 subunit C family. As to quaternary structure, component of the eukaryotic translation initiation factor 3 (eIF-3) complex. The eIF-3 complex interacts with pix.

It is found in the cytoplasm. Functionally, component of the eukaryotic translation initiation factor 3 (eIF-3) complex, which is involved in protein synthesis of a specialized repertoire of mRNAs and, together with other initiation factors, stimulates binding of mRNA and methionyl-tRNAi to the 40S ribosome. The eIF-3 complex specifically targets and initiates translation of a subset of mRNAs involved in cell proliferation. The protein is Eukaryotic translation initiation factor 3 subunit C of Drosophila yakuba (Fruit fly).